A 290-amino-acid chain; its full sequence is MNDDASMSSMGLRGWGAFYEPPARNLGLQLMSSVPADRDTKHLLSATPFLHHHQHQQYVPHHHHQPHHPRDCGTNANANGNGNGVGYGMMPATHTLRMLQHQPEPQPQLQHPPSPPHPKEECISPPLMEENVPVKPPPPKKRQQGRQPKVLRPKKPKKPAAPCEDGAPPSAPAPRRRGPRKNIGMVINGIDLDLSRIPTRICSCTGAPQQRYRWGAGGWQSACCTTTVSTYPLPMSMKPRGARIAGRKMSHGAFKKVLEKLASEGYNLNNPIDLKTFWAKHGTNKFVTIR.

Disordered stretches follow at residues 60-90 (PHHHHQPHHPRDCGTNANANGNGNGVGYGMM) and 102-183 (QPEP…RKNI). The span at 104–116 (EPQPQLQHPPSPP) shows a compositional bias: pro residues. Over residues 138–158 (PPKKRQQGRQPKVLRPKKPKK) the composition is skewed to basic residues.

Belongs to the BBR/BPC family.

The protein resides in the nucleus. Its function is as follows. Transcriptional regulator that specifically binds to GA-rich elements (GAGA-repeats) present in regulatory sequences of genes involved in developmental processes. The polypeptide is Barley B recombinant-like protein C (Oryza sativa subsp. japonica (Rice)).